Reading from the N-terminus, the 103-residue chain is MAAKIRQNDEVIVLAGKDKGKRGKVTQVLPNGKVIVEGVKIITKHEKPVPALGKEGGLVKKEAPIDASNVAIFNPKTNKADRVGFRFEDGKKVRFFKSNNEII.

The protein belongs to the universal ribosomal protein uL24 family. Part of the 50S ribosomal subunit.

One of two assembly initiator proteins, it binds directly to the 5'-end of the 23S rRNA, where it nucleates assembly of the 50S subunit. Its function is as follows. One of the proteins that surrounds the polypeptide exit tunnel on the outside of the subunit. The sequence is that of Large ribosomal subunit protein uL24 from Actinobacillus succinogenes (strain ATCC 55618 / DSM 22257 / CCUG 43843 / 130Z).